A 102-amino-acid polypeptide reads, in one-letter code: MAESVNENNNNAGDSNGSGRTKRNTIVTIVVVVIVVTLIIILATKKGWIGGSGKKVGAEEPATKLSSKSDDRNGGPNKKSPAKGSSKDDNNTEESVQSNLYG.

The segment at 1–21 (MAESVNENNNNAGDSNGSGRT) is disordered. A glycan (N-linked (GlcNAc...) asparagine) is linked at Asn-16. Residues 24–44 (NTIVTIVVVVIVVTLIIILAT) form a helical membrane-spanning segment. Positions 49–102 (IGGSGKKVGAEEPATKLSSKSDDRNGGPNKKSPAKGSSKDDNNTEESVQSNLYG) are disordered. Residues 56–73 (VGAEEPATKLSSKSDDRN) show a composition bias toward basic and acidic residues. An N-linked (GlcNAc...) asparagine glycan is attached at Asn-90. Residues 93–102 (EESVQSNLYG) show a composition bias toward polar residues.

It localises to the membrane. This is an uncharacterized protein from Encephalitozoon cuniculi (strain GB-M1) (Microsporidian parasite).